The sequence spans 182 residues: Vomeronasal secretory protein 1 (182 aa).

Positions 1-18 (MRALLLIISFCLVAVLQA) are cleaved as a signal peptide. N-linked (GlcNAc...) asparagine glycosylation occurs at Asn-30. Cysteines 76 and 168 form a disulfide.

This sequence belongs to the calycin superfamily. Lipocalin family. As to expression, specifically expressed in vomeronasal and posterior glands of the nasal septum, the ducts of which open into the lumen of the vomeronasal organ.

The protein resides in the secreted. Functionally, transport of lipophilic molecules, possible pheromone-carrier. The protein is Vomeronasal secretory protein 1 (Lcn3) of Mus musculus (Mouse).